We begin with the raw amino-acid sequence, 256 residues long: MQSRLSWIFNPKTGKTVMLAFDHGYFQGPTIGLERIDINIAPLFEHADVLMCTRGILRSVVPPATNKPVVLRASGANSILAELSNEAVALSMDDAVRLNSCAVAAQVYIGSEYEHQSIKNIIQLVDAGMKVGMPTMAVTGVGKDMVRDQRYFSLATRIAAEMGAQIIKTYYVEKGFERIVAGCPVPIVIAGGKKLPERETLEMCWQAIDQGASGVDMGRNIFQSDHPVAMMKAVQAVVHHNETADRAYELYLSEKQ.

The active-site Schiff-base intermediate with substrate is Lys168.

It belongs to the DeoC/FbaB aldolase family. In terms of assembly, homodecamer.

The protein localises to the cytoplasm. It catalyses the reaction dihydroxyacetone phosphate + acetyl-CoA = 3-hydroxy-2,4-dioxopentyl phosphate + CoA. Its function is as follows. Involved in the degradation of phospho-AI-2, thereby terminating induction of the lsr operon and closing the AI-2 signaling cycle. Catalyzes the transfer of an acetyl moiety from 3-hydroxy-5-phosphonooxypentane-2,4-dione to CoA to form glycerone phosphate and acetyl-CoA. The protein is 3-hydroxy-5-phosphonooxypentane-2,4-dione thiolase (lsrF) of Shigella flexneri.